We begin with the raw amino-acid sequence, 669 residues long: Glycerol uptake/efflux facilitator protein (669 aa).

Residues 1–16 (MSNPQKALNDFLSSES) are compositionally biased toward polar residues. Disordered stretches follow at residues 1 to 99 (MSNP…TYVP) and 123 to 147 (QDIN…RGQT). The Extracellular segment spans residues 1-254 (MSNPQKALND…WSSVKNTYLK (254 aa)). Positions 50–68 (NNNNNNNNNNNNSNNNNNG) are enriched in low complexity. The span at 72–81 (GNDDDYDYEM) shows a compositional bias: acidic residues. 2 stretches are compositionally biased toward polar residues: residues 87 to 99 (SPQS…TYVP) and 133 to 147 (PSAS…RGQT). Residue Ser150 is modified to Phosphoserine. The tract at residues 167–215 (HTIPESHLSRRRSRSRATSNAGHSANTGATNGRTTGAQTNMESNESPRN) is disordered. At Thr168 the chain carries Phosphothreonine. Over residues 191–206 (ANTGATNGRTTGAQTN) the composition is skewed to low complexity. Ser209 and Ser212 each carry phosphoserine. A helical transmembrane segment spans residues 255–275 (EFLAEFMGTMVMIIFGSAVVC). Topologically, residues 276–325 (QVNVAGKIQQDNFNVALDNLNVTGSSAETIDAMKSLTSLVSSVAGGTFDD) are cytoplasmic. Residues 326 to 346 (VALGWAAAVVMGYFCAGGSAI) traverse the membrane as a helical segment. Residues 347–369 (SGAHLNPSITLANLVYRGFPLKK) are Extracellular-facing. The NPA 1 motif lies at 352–354 (NPS). Residues 370–390 (VPYYFAGQLIGAFTGALILFI) form a helical membrane-spanning segment. Over 391–446 (WYKRVLQEAYSDWWMNESVAGMFCVFPKPYLSSGRQFFSEFLCGAMLQAGTFALTD) the chain is Cytoplasmic. The chain crosses the membrane as a helical span at residues 447–467 (PYTCLSSDVFPLMMFILIFII). Residues 468–506 (NASMAYQTGTAMNLARDLGPRLALYAVGFDHKMLWVHHH) are Extracellular-facing. Positions 480–482 (NLA) match the NPA 2 motif. The chain crosses the membrane as a helical span at residues 507–527 (HFFWVPMVGPFIGALMGGLVY). Residues 528 to 669 (DVCIYQGHES…SHYGNAKKVT (142 aa)) lie on the Cytoplasmic side of the membrane. Disordered stretches follow at residues 591–615 (LQKT…VQFK) and 635–669 (DSIE…KKVT). A compositionally biased stretch (polar residues) spans 638–655 (ETASLGATTTDSIGLSDT).

Belongs to the MIP/aquaporin (TC 1.A.8) family.

The protein localises to the membrane. Functionally, channel protein for glycerol. Has a role in both glycerol influx and efflux. Plays a role in osmoregulation: under osmotic stress the channel is apparently closed to allow accumulation of glycerol in the cell under hyperosmotic conditions. This chain is Glycerol uptake/efflux facilitator protein (FPS1), found in Saccharomyces cerevisiae (strain ATCC 204508 / S288c) (Baker's yeast).